We begin with the raw amino-acid sequence, 927 residues long: Non-lysosomal glucosylceramidase (927 aa).

Residues 32–62 (EETGGTKDVQVTDCKSPEDSRPPKETDCCNP) form a disordered region. Residues 46-58 (KSPEDSRPPKETD) show a composition bias toward basic and acidic residues.

The protein belongs to the non-lysosomal glucosylceramidase family. In terms of tissue distribution, widely expressed. Mainly expressed in brain, heart, skeletal muscle, kidney and placenta and expressed at lower levels in liver, spleen, small intestine and lung. Detectable in colon, thymus and peripheral blood leukocytes.

The protein resides in the endoplasmic reticulum membrane. It is found in the golgi apparatus membrane. It catalyses the reaction a beta-D-glucosyl-(1&lt;-&gt;1')-N-acylsphing-4-enine + H2O = an N-acylsphing-4-enine + D-glucose. It carries out the reaction a beta-D-galactosyl-(1&lt;-&gt;1')-N-acylsphing-4-enine + H2O = an N-acylsphing-4-enine + D-galactose. The enzyme catalyses beta-D-glucosyl-(1-&gt;3)-O-lithocholate + H2O = lithocholate + D-glucose. The catalysed reaction is beta-D-glucosyl-(1-&gt;3)-O-chenodeoxycholate + H2O = chenodeoxycholate + D-glucose. It catalyses the reaction a di-trans,poly-cis-dolichyl beta-D-glucosyl phosphate + chenodeoxycholate = beta-D-glucosyl-(1-&gt;3)-O-chenodeoxycholate + a di-trans,poly-cis-dolichyl phosphate + H(+). It carries out the reaction octyl beta-D-glucose + chenodeoxycholate = beta-D-glucosyl-(1-&gt;3)-O-chenodeoxycholate + octan-1-ol. The enzyme catalyses cholesteryl 3-beta-D-glucoside + H2O = cholesterol + D-glucose. The catalysed reaction is a beta-D-glucosyl-(1&lt;-&gt;1')-N-acylsphing-4-enine + cholesterol = cholesteryl 3-beta-D-glucoside + an N-acylsphing-4-enine. It catalyses the reaction beta-D-glucosyl-N-(9Z-octadecenoyl)-sphing-4E-enine + cholesterol = N-(9Z-octadecenoyl)-sphing-4-enine + cholesteryl 3-beta-D-glucoside. It carries out the reaction a beta-D-galactosyl-(1&lt;-&gt;1')-N-acylsphing-4-enine + cholesterol = cholesteryl 3-beta-D-galactoside + an N-acylsphing-4-enine. The enzyme catalyses 1-(beta-D-galactosyl)-N-dodecanoylsphing-4-enine + cholesterol = cholesteryl 3-beta-D-galactoside + N-dodecanoylsphing-4-enine. It participates in lipid metabolism; sphingolipid metabolism. The protein operates within steroid metabolism; cholesterol metabolism. Inhibited by AMP-DMN/N -((5-adamantane-1-yl-methoxy)pentyl)-deoxynojirimycin. Activated by Mn(2+), Co(2+) and Mg(2+) and inhibited by Zn(2+). Enzymatic activity is dependent on membrane association and requires the presence of lipids. The membrane-associated enzyme is not inhibited by condutiriol B epoxide and bromocondutiriol B epoxide. Non-lysosomal glucosylceramidase that catalyzes the hydrolysis of glucosylceramides/GlcCers (such as beta-D-glucosyl-(1&lt;-&gt;1')-N-acylsphing-4-enine) to free glucose and ceramides (such as N-acylsphing-4-enine). GlcCers are membrane glycosphingolipids that have a wide intracellular distribution. They are the main precursors of more complex glycosphingolipids that play a role in cellular growth, differentiation, adhesion, signaling, cytoskeletal dynamics and membrane properties. Involved in the transglucosylation of cholesterol, transfers glucose from GlcCer to cholesterol, thereby modifying its water solubility and biological properties. Under specific conditions, may catalyze the reverse reaction, transferring glucose from cholesteryl-3-beta-D-glucoside to ceramide (such as N-acylsphing-4-enine). May play a role in the metabolism of bile acids. Able to hydrolyze bile acid 3-O-glucosides as well as to produce bile acid-glucose conjugates thanks to a bile acid glucosyl transferase activity. Catalyzes the hydrolysis of galactosylceramides/GalCers (such as beta-D-galactosyl-(1&lt;-&gt;1')-N-acylsphing-4-enine), as well as the galactosyl transfer between GalCers and cholesterol in vitro with lower activity compared with their activity against GlcCers. This Homo sapiens (Human) protein is Non-lysosomal glucosylceramidase.